The sequence spans 252 residues: Aspartate/glutamate leucyltransferase (252 aa).

Belongs to the R-transferase family. Bpt subfamily.

Its subcellular location is the cytoplasm. The catalysed reaction is N-terminal L-glutamyl-[protein] + L-leucyl-tRNA(Leu) = N-terminal L-leucyl-L-glutamyl-[protein] + tRNA(Leu) + H(+). The enzyme catalyses N-terminal L-aspartyl-[protein] + L-leucyl-tRNA(Leu) = N-terminal L-leucyl-L-aspartyl-[protein] + tRNA(Leu) + H(+). In terms of biological role, functions in the N-end rule pathway of protein degradation where it conjugates Leu from its aminoacyl-tRNA to the N-termini of proteins containing an N-terminal aspartate or glutamate. The polypeptide is Aspartate/glutamate leucyltransferase (Afipia carboxidovorans (strain ATCC 49405 / DSM 1227 / KCTC 32145 / OM5) (Oligotropha carboxidovorans)).